The chain runs to 371 residues: Chaperone protein DnaJ (371 aa).

One can recognise a J domain in the interval glutamate 5–glycine 69. A CR-type zinc finger spans residues glycine 127 to threonine 209. Zn(2+) contacts are provided by cysteine 140, cysteine 143, cysteine 157, cysteine 160, cysteine 183, cysteine 186, cysteine 197, and cysteine 200. CXXCXGXG motif repeat units follow at residues cysteine 140–glycine 147, cysteine 157–glycine 164, cysteine 183–glycine 190, and cysteine 197–glycine 204.

The protein belongs to the DnaJ family. As to quaternary structure, homodimer. It depends on Zn(2+) as a cofactor.

It localises to the cytoplasm. In terms of biological role, participates actively in the response to hyperosmotic and heat shock by preventing the aggregation of stress-denatured proteins and by disaggregating proteins, also in an autonomous, DnaK-independent fashion. Unfolded proteins bind initially to DnaJ; upon interaction with the DnaJ-bound protein, DnaK hydrolyzes its bound ATP, resulting in the formation of a stable complex. GrpE releases ADP from DnaK; ATP binding to DnaK triggers the release of the substrate protein, thus completing the reaction cycle. Several rounds of ATP-dependent interactions between DnaJ, DnaK and GrpE are required for fully efficient folding. Also involved, together with DnaK and GrpE, in the DNA replication of plasmids through activation of initiation proteins. The polypeptide is Chaperone protein DnaJ (Streptococcus agalactiae serotype Ia (strain ATCC 27591 / A909 / CDC SS700)).